Consider the following 580-residue polypeptide: High affinity choline transporter 1 (580 aa).

At 1–6 (MPFHVE) the chain is on the extracellular side. Residues 7-27 (GLVAIILFYLLIFLVGIWAAW) form a helical membrane-spanning segment. Residues 28-48 (KTKNSGNAEERSEAIIVGGRD) lie on the Cytoplasmic side of the membrane. Residues 49-69 (IGLLVGGFTMTATWVGGGYIN) form a helical membrane-spanning segment. Residues 70–81 (GTAEAVYGPGCG) lie on the Extracellular side of the membrane. Residues 82-102 (LAWAQAPIGYSLSLILGGLFF) traverse the membrane as a helical segment. The Cytoplasmic segment spans residues 103–125 (AKPMRSKGYVTMLDPFQQIYGKR). The helical transmembrane segment at 126–146 (MGGLLFIPALMGEMFWAAAIF) threads the bilayer. Over 147 to 164 (SALGATISVIIDVDVNIS) the chain is Extracellular. A helical transmembrane segment spans residues 165 to 185 (VIVSALIAILYTLVGGLYSVA). Topologically, residues 186–191 (YTDVVQ) are cytoplasmic. The helical transmembrane segment at 192–212 (LFCIFIGLWISVPFALSHPAV) threads the bilayer. The Extracellular segment spans residues 213 to 237 (TDIGFTAVHAKYQSPWLGTIESVEV). Residues 238-258 (YTWLDNFLLLMLGGIPWQAYF) form a helical membrane-spanning segment. The Cytoplasmic segment spans residues 259–274 (QRVLSSSSATYAQVLS). The helical transmembrane segment at 275–295 (FLAAFGCLVMALPAICIGAIG) threads the bilayer. Residues 296-317 (ASTDWNQTAYGFPDPKTKEEAD) lie on the Extracellular side of the membrane. The N-linked (GlcNAc...) asparagine glycan is linked to Asn-301. Residues 318–338 (MILPIVLQYLCPVYISFFGLG) traverse the membrane as a helical segment. Topologically, residues 339-376 (AVSAAVMSSADSSILSASSMFARNIYQLSFRQNASDKE) are cytoplasmic. The chain crosses the membrane as a helical span at residues 377 to 397 (IVWVMRITVFVFGASATAMAL). Over 398–406 (LTKTVYGLW) the chain is Extracellular. Residues 407–427 (YLSSDLVYIIIFPQLLCVLFI) form a helical membrane-spanning segment. The Cytoplasmic portion of the chain corresponds to 428 to 435 (KGTNTYGA). Residues 436 to 456 (VAGYIFGLFLRITGGEPYLYL) traverse the membrane as a helical segment. Residues 457–481 (QPLIFYPGYYPDKNGIYNQRFPFKT) are Extracellular-facing. Residues 482–502 (LSMVTSFFTNICVSYLAKYLF) traverse the membrane as a helical segment. Residues 502–580 (FESGTLPPKL…EGSGTEDNLQ (79 aa)) form a mediates interaction with SEC14L1 region. Residues 503 to 580 (ESGTLPPKLD…EGSGTEDNLQ (78 aa)) lie on the Cytoplasmic side of the membrane. Residues 527-532 (DKTILV) carry the Dileucine-like motif motif.

Belongs to the sodium:solute symporter (SSF) (TC 2.A.21) family. In terms of assembly, homooligomerizes at cell surface. Interacts with SEC14L1; may regulate SLC5A7. Post-translationally, phosphorylated. Expressed in basal forebrain, brain stem, spinal chord, and striatum. Specific for cholinergic neurons.

It localises to the presynaptic cell membrane. The protein resides in the cell projection. The protein localises to the axon. Its subcellular location is the early endosome membrane. It is found in the cytoplasmic vesicle. It localises to the secretory vesicle. The protein resides in the synaptic vesicle membrane. It catalyses the reaction choline(out) + n Na(+)(out) = choline(in) + n Na(+)(in). Choline uptake activity is regulated by SLC5A7/CHT1 internalization (inactive form) from the cell surface and recycling of internalized SLC5A7/CHT1 into the cell surface (active form). Activated by extracellular chloride ion. Specifically inhibited by nanomolar concentrations of hemicholinium 3. High-affinity Na(+)-coupled choline transmembrane symporter. Functions as an electrogenic, voltage-dependent transporter with variable charge/choline stoichiometry. Choline uptake and choline-induced current is also Cl(-)-dependent where Cl(-) is likely a regulatory ion rather than cotransported ion. Plays a critical role in acetylcholine (ACh) synthesis by taking up the substrate choline from the synaptic cleft into the presynaptic nerve terminals after neurotransmitter release. SLC5A7/CHT1-mediated choline high-affinity transport in cholinergic neurons is the rate-limiting step for production of ACh, thereby facilitating communication by subsequent action potentials. Localized predominantly in presynaptic terminal intracellular organelles, and translocated to the plasma membrane in active form in response to neuronal activity. The chain is High affinity choline transporter 1 from Rattus norvegicus (Rat).